Here is a 394-residue protein sequence, read N- to C-terminus: Acryloyl-CoA reductase (NADH) (394 aa).

FAD-binding positions include 135 to 144 (FALTEPNAGS) and 170 to 172 (FIS). A substrate-binding site is contributed by S144. 254-257 (DGAR) is a binding site for substrate. FAD-binding positions include R282, Q293, and 350-354 (QIHGG). The Proton acceptor role is filled by E377. Substrate is bound at residue G378. 379 to 381 (TSE) is a binding site for FAD.

As to quaternary structure, heterohexadecamer; tetramer of tetramers. Each tetramer is composed of 2 alpha (AcrC), a beta (AcrA) and a gamma (AcrB) subunit. The cofactor is FAD.

It localises to the cytoplasm. It catalyses the reaction propanoyl-CoA + NAD(+) = acryloyl-CoA + NADH + H(+). Probable catalytic subunit of the acryloyl-CoA reductase complex involved in the pathway of L-alanine fermentation. Catalyzes the irreversible NADH-dependent formation of propionyl-CoA from acryloyl-CoA. It can also use 3-buten-2-one as substrate. In Anaerotignum propionicum (Clostridium propionicum), this protein is Acryloyl-CoA reductase (NADH) (acrC).